The following is a 428-amino-acid chain: Serine--tRNA ligase (428 aa).

Residue 235–237 coordinates L-serine; sequence TAE. ATP is bound at residue 266 to 268; sequence RSE. Glutamate 289 lines the L-serine pocket. 353–356 contacts ATP; the sequence is EISS. An L-serine-binding site is contributed by serine 389.

Belongs to the class-II aminoacyl-tRNA synthetase family. Type-1 seryl-tRNA synthetase subfamily. In terms of assembly, homodimer. The tRNA molecule binds across the dimer.

It is found in the cytoplasm. The catalysed reaction is tRNA(Ser) + L-serine + ATP = L-seryl-tRNA(Ser) + AMP + diphosphate + H(+). It catalyses the reaction tRNA(Sec) + L-serine + ATP = L-seryl-tRNA(Sec) + AMP + diphosphate + H(+). The protein operates within aminoacyl-tRNA biosynthesis; selenocysteinyl-tRNA(Sec) biosynthesis; L-seryl-tRNA(Sec) from L-serine and tRNA(Sec): step 1/1. Functionally, catalyzes the attachment of serine to tRNA(Ser). Is also able to aminoacylate tRNA(Sec) with serine, to form the misacylated tRNA L-seryl-tRNA(Sec), which will be further converted into selenocysteinyl-tRNA(Sec). The chain is Serine--tRNA ligase from Shewanella baltica (strain OS185).